The following is a 146-amino-acid chain: Transcriptional regulator MraZ (146 aa).

SpoVT-AbrB domains follow at residues 4–46 (SYEK…SKKS) and 75–118 (TIEV…SKEK).

This sequence belongs to the MraZ family. As to quaternary structure, forms oligomers.

The protein resides in the cytoplasm. Its subcellular location is the nucleoid. The sequence is that of Transcriptional regulator MraZ from Mycoplasma mobile (strain ATCC 43663 / 163K / NCTC 11711) (Mesomycoplasma mobile).